The primary structure comprises 225 residues: RNA chaperone ProQ (225 aa).

Residues 103–173 (LEEAKARVQT…APREERHTPV (71 aa)) are disordered. Positions 109-118 (RVQTQRAAQQ) are enriched in low complexity. Positions 137–146 (RERKPRPQQP) are enriched in basic residues. Residues 147 to 156 (RRKEGAEQRK) are compositionally biased toward basic and acidic residues.

This sequence belongs to the ProQ family.

Its subcellular location is the cytoplasm. In terms of biological role, RNA chaperone with significant RNA binding, RNA strand exchange and RNA duplexing activities. May regulate ProP activity through an RNA-based, post-transcriptional mechanism. The chain is RNA chaperone ProQ from Klebsiella pneumoniae (strain 342).